The primary structure comprises 241 residues: Putative CRISPR-associated endoribonuclease-like protein Cas6 (241 aa).

Belongs to the CRISPR-associated protein Cas6/Cse3/CasE family. Binds crRNA.

Its function is as follows. CRISPR (clustered regularly interspaced short palindromic repeat), is an adaptive immune system that provides protection against mobile genetic elements (viruses, transposable elements and conjugative plasmids). CRISPR clusters contain sequences complementary to antecedent mobile elements and target invading nucleic acids. CRISPR clusters are transcribed and processed into CRISPR RNA (crRNA), also called psiRNA (prokaryotic silencing) in this organism (Potential). This Pyrococcus furiosus (strain ATCC 43587 / DSM 3638 / JCM 8422 / Vc1) protein is Putative CRISPR-associated endoribonuclease-like protein Cas6 (cas6b).